The following is a 153-amino-acid chain: Small ribosomal subunit protein bS16 (153 aa).

The disordered stretch occupies residues 130–153 (EAEAAAAAEEAPAEEAAEEAPAEA). Acidic residues predominate over residues 140–153 (APAEEAAEEAPAEA).

It belongs to the bacterial ribosomal protein bS16 family.

The protein is Small ribosomal subunit protein bS16 of Bifidobacterium longum subsp. infantis (strain ATCC 15697 / DSM 20088 / JCM 1222 / NCTC 11817 / S12).